Here is a 179-residue protein sequence, read N- to C-terminus: Large ribosomal subunit protein uL6 (179 aa).

Belongs to the universal ribosomal protein uL6 family. As to quaternary structure, part of the 50S ribosomal subunit.

This protein binds to the 23S rRNA, and is important in its secondary structure. It is located near the subunit interface in the base of the L7/L12 stalk, and near the tRNA binding site of the peptidyltransferase center. The chain is Large ribosomal subunit protein uL6 from Prochlorococcus marinus (strain MIT 9312).